Consider the following 347-residue polypeptide: MGDQPVDLSETALAEAVGAARQAFARAGDLDALARLKTEHLGDRAPLALARQALGGVPKDQRADAGRRVNAARAQAQQAYDERLDVLRAERDAAVLVAERIDVTLPSTRQPVGARHPITILAEHIADTFIAMGWELAEGPEVEAEQFNFDALNFPADHPARSEQDTFYIAPEGSRQLLRTHTSPVQVRTLLARELPVYVISIGRTFRTDELDATHTPVFHQVEGLAVDRGLSMAHLRGTLDAFARAEFGPQARTRIRPHFFPFTEPSAEVDVWFVGKKGGAGWVEWGGCGMVHPNVLRAAGIDPDVYSGFAFGMGLERTLQFRNGIPDMRDMVEGDVRFLLPFGVGA.

Position 265 (Glu265) interacts with Mg(2+).

This sequence belongs to the class-II aminoacyl-tRNA synthetase family. Phe-tRNA synthetase alpha subunit type 1 subfamily. As to quaternary structure, tetramer of two alpha and two beta subunits. It depends on Mg(2+) as a cofactor.

Its subcellular location is the cytoplasm. The enzyme catalyses tRNA(Phe) + L-phenylalanine + ATP = L-phenylalanyl-tRNA(Phe) + AMP + diphosphate + H(+). The sequence is that of Phenylalanine--tRNA ligase alpha subunit from Mycolicibacterium paratuberculosis (strain ATCC BAA-968 / K-10) (Mycobacterium paratuberculosis).